The following is a 415-amino-acid chain: Tyrosine--tRNA ligase (415 aa).

Residues 54–63 (PTGRDIHLGH) carry the 'HIGH' region motif. The 'KMSKS' region signature appears at 248 to 252 (KMSKS). Lys-251 provides a ligand contact to ATP. The S4 RNA-binding domain maps to 351 to 415 (AKAFYLLSAI…GKKTFRRLTR (65 aa)).

Belongs to the class-I aminoacyl-tRNA synthetase family. TyrS type 2 subfamily. As to quaternary structure, homodimer.

The protein localises to the cytoplasm. It carries out the reaction tRNA(Tyr) + L-tyrosine + ATP = L-tyrosyl-tRNA(Tyr) + AMP + diphosphate + H(+). Its function is as follows. Catalyzes the attachment of tyrosine to tRNA(Tyr) in a two-step reaction: tyrosine is first activated by ATP to form Tyr-AMP and then transferred to the acceptor end of tRNA(Tyr). This is Tyrosine--tRNA ligase from Prochlorococcus marinus (strain MIT 9313).